A 317-amino-acid chain; its full sequence is Transaldolase (317 aa).

The active-site Schiff-base intermediate with substrate is Lys126.

This sequence belongs to the transaldolase family. Type 1 subfamily. Homodimer.

The protein localises to the cytoplasm. The enzyme catalyses D-sedoheptulose 7-phosphate + D-glyceraldehyde 3-phosphate = D-erythrose 4-phosphate + beta-D-fructose 6-phosphate. It participates in carbohydrate degradation; pentose phosphate pathway; D-glyceraldehyde 3-phosphate and beta-D-fructose 6-phosphate from D-ribose 5-phosphate and D-xylulose 5-phosphate (non-oxidative stage): step 2/3. Its function is as follows. Transaldolase is important for the balance of metabolites in the pentose-phosphate pathway. This Burkholderia pseudomallei (strain 1710b) protein is Transaldolase.